Reading from the N-terminus, the 270-residue chain is Phosphatidate cytidylyltransferase (270 aa).

A run of 7 helical transmembrane segments spans residues 19–39 (LWLT…IGLA), 53–73 (TAFS…LLIL), 76–96 (GALL…VTQW), 101–121 (GWPA…SLLR), 126–146 (FGFT…IAAY), 183–203 (LVAS…ALLL), and 248–268 (ALLY…AIFF).

It belongs to the CDS family.

The protein localises to the cell inner membrane. It catalyses the reaction a 1,2-diacyl-sn-glycero-3-phosphate + CTP + H(+) = a CDP-1,2-diacyl-sn-glycerol + diphosphate. The protein operates within phospholipid metabolism; CDP-diacylglycerol biosynthesis; CDP-diacylglycerol from sn-glycerol 3-phosphate: step 3/3. This Brucella suis biovar 1 (strain 1330) protein is Phosphatidate cytidylyltransferase (cdsA).